We begin with the raw amino-acid sequence, 508 residues long: UDP-N-acetylmuramoyl-L-alanyl-D-glutamate--2,6-diaminopimelate ligase (508 aa).

Serine 29 serves as a coordination point for UDP-N-acetyl-alpha-D-muramoyl-L-alanyl-D-glutamate. 112–118 provides a ligand contact to ATP; it reads GTNGKTS. UDP-N-acetyl-alpha-D-muramoyl-L-alanyl-D-glutamate-binding positions include 159 to 160, serine 186, glutamine 192, and arginine 194; that span reads TT. Position 226 is an N6-carboxylysine (lysine 226). Meso-2,6-diaminopimelate contacts are provided by residues arginine 398, 421 to 424, glycine 473, and glutamate 477; that span reads DNPR. The Meso-diaminopimelate recognition motif motif lies at 421 to 424; the sequence is DNPR.

This sequence belongs to the MurCDEF family. MurE subfamily. It depends on Mg(2+) as a cofactor. In terms of processing, carboxylation is probably crucial for Mg(2+) binding and, consequently, for the gamma-phosphate positioning of ATP.

The protein localises to the cytoplasm. The catalysed reaction is UDP-N-acetyl-alpha-D-muramoyl-L-alanyl-D-glutamate + meso-2,6-diaminopimelate + ATP = UDP-N-acetyl-alpha-D-muramoyl-L-alanyl-gamma-D-glutamyl-meso-2,6-diaminopimelate + ADP + phosphate + H(+). It functions in the pathway cell wall biogenesis; peptidoglycan biosynthesis. Its function is as follows. Catalyzes the addition of meso-diaminopimelic acid to the nucleotide precursor UDP-N-acetylmuramoyl-L-alanyl-D-glutamate (UMAG) in the biosynthesis of bacterial cell-wall peptidoglycan. The protein is UDP-N-acetylmuramoyl-L-alanyl-D-glutamate--2,6-diaminopimelate ligase of Janthinobacterium sp. (strain Marseille) (Minibacterium massiliensis).